A 358-amino-acid chain; its full sequence is Holliday junction branch migration complex subunit RuvB (358 aa).

The interval methionine 1–tyrosine 183 is large ATPase domain (RuvB-L). ATP is bound by residues leucine 22, arginine 23, glycine 64, lysine 67, threonine 68, threonine 69, glutamate 130–phenylalanine 132, arginine 173, tyrosine 183, and arginine 220. Mg(2+) is bound at residue threonine 68. The small ATPAse domain (RuvB-S) stretch occupies residues serine 184–glutamate 254. The tract at residues glutamate 257 to glycine 358 is head domain (RuvB-H). Residues arginine 312 and arginine 317 each coordinate DNA.

It belongs to the RuvB family. As to quaternary structure, homohexamer. Forms an RuvA(8)-RuvB(12)-Holliday junction (HJ) complex. HJ DNA is sandwiched between 2 RuvA tetramers; dsDNA enters through RuvA and exits via RuvB. An RuvB hexamer assembles on each DNA strand where it exits the tetramer. Each RuvB hexamer is contacted by two RuvA subunits (via domain III) on 2 adjacent RuvB subunits; this complex drives branch migration. In the full resolvosome a probable DNA-RuvA(4)-RuvB(12)-RuvC(2) complex forms which resolves the HJ.

It localises to the cytoplasm. It carries out the reaction ATP + H2O = ADP + phosphate + H(+). In terms of biological role, the RuvA-RuvB-RuvC complex processes Holliday junction (HJ) DNA during genetic recombination and DNA repair, while the RuvA-RuvB complex plays an important role in the rescue of blocked DNA replication forks via replication fork reversal (RFR). RuvA specifically binds to HJ cruciform DNA, conferring on it an open structure. The RuvB hexamer acts as an ATP-dependent pump, pulling dsDNA into and through the RuvAB complex. RuvB forms 2 homohexamers on either side of HJ DNA bound by 1 or 2 RuvA tetramers; 4 subunits per hexamer contact DNA at a time. Coordinated motions by a converter formed by DNA-disengaged RuvB subunits stimulates ATP hydrolysis and nucleotide exchange. Immobilization of the converter enables RuvB to convert the ATP-contained energy into a lever motion, pulling 2 nucleotides of DNA out of the RuvA tetramer per ATP hydrolyzed, thus driving DNA branch migration. The RuvB motors rotate together with the DNA substrate, which together with the progressing nucleotide cycle form the mechanistic basis for DNA recombination by continuous HJ branch migration. Branch migration allows RuvC to scan DNA until it finds its consensus sequence, where it cleaves and resolves cruciform DNA. This Paenarthrobacter aurescens (strain TC1) protein is Holliday junction branch migration complex subunit RuvB.